The sequence spans 483 residues: UDP-glucosyl transferase 73B2 (483 aa).

The active-site Proton acceptor is the histidine 22. Histidine 22 is a binding site for an anthocyanidin. The active-site Charge relay is the aspartate 133. Alanine 355, glutamine 357, histidine 372, tryptophan 375, asparagine 376, serine 377, and glutamate 380 together coordinate UDP-alpha-D-glucose. Alanine 395 lines the an anthocyanidin pocket. Residues glutamate 396 and glutamine 397 each coordinate UDP-alpha-D-glucose.

Belongs to the UDP-glycosyltransferase family. In terms of tissue distribution, expressed in roots and flowers.

It catalyses the reaction a 7-O-hydroxy-flavonol + UDP-alpha-D-glucose = a flavonol 7-O-beta-D-glucoside + UDP + H(+). The protein operates within secondary metabolite biosynthesis; flavonoid biosynthesis. Catalyzes the glycosylation of flavonoids from UDP-glucose. Uses a wide range of flavonoid substrates including flavonols (quercetin, kaempferol, isorhamnetin, 3-OH 7,2',4'-MeO-flavone), flavones (luteolin, apigenin), flavanones (naringenin, hesperetin), flavanonols (taxifolin), isoflavones (genistein, daidzein), flavonol glycosides (quercitrin, isoquercitrin, rutin), and chalcones (isoliquiritigenin). Specific for the C-7 position, with a 20-fold lower activity for the C-3 position. The chain is UDP-glucosyl transferase 73B2 (UGT73B2) from Arabidopsis thaliana (Mouse-ear cress).